We begin with the raw amino-acid sequence, 375 residues long: Proclotting enzyme (375 aa).

The first 21 residues, 1 to 21 (MLVNNVFSLLCFPLLMSVVRC), serve as a signal peptide directing secretion. A propeptide spanning residues 22–27 (STLSRQ) is cleaved from the precursor. Gln-30 bears the Pyrrolidone carboxylic acid mark. Residues 39–84 (LCSNRFTEEGTCKNVLDCRILLQKNDYNLLKESICGFEGITPKVCC) enclose the Clip domain. Cystine bridges form between Cys-40-Cys-83, Cys-50-Cys-73, and Cys-56-Cys-84. The disordered stretch occupies residues 90–113 (VISSTQAPPETTTTERPPKQIPPN). 4 cysteine pairs are disulfide-bonded: Cys-118-Cys-248, Cys-157-Cys-173, Cys-295-Cys-311, and Cys-322-Cys-351. Asn-122 carries an N-linked (GlcNAc...) asparagine glycan. The Peptidase S1 domain occupies 128-375 (IIGGREAPIG…FLDWIAEHMV (248 aa)). The Charge relay system role is filled by His-172. The Ca(2+) site is built by Glu-194, Asn-196, Ser-199, and Asp-202. The active-site Charge relay system is Asp-228. Residues Asn-235 and Asn-304 are each glycosylated (N-linked (GlcNAc...) asparagine). The Charge relay system role is filled by Ser-326.

This sequence belongs to the peptidase S1 family. CLIP subfamily. In the active form, heterodimer of a light chain and a heavy chain; disulfide-linked. Forms a covalent heterodimer with intracellular coagulation inhibitor 2/LICI-2. Post-translationally, proteolytically cleaved into its mature active form by serine protease factor B. Cleavage produces a 25 kDa light chain containing the CLIP domain and a catalytic 31 kDa heavy chain which remain covalently associated through an interchain disulfide bond. Proteolytically cleaved by clotting factor G subunit beta. In terms of processing, contains six O-linked carbohydrate chains in the N-terminal light chain. Expressed in hemocytes (at protein level).

It localises to the cytoplasmic vesicle. The protein localises to the secretory vesicle. The protein resides in the secreted. It carries out the reaction Selective cleavage of 18-Arg-|- and 47-Arg-|- bonds in coagulogen to form coagulin and fragments.. With respect to regulation, inhibited by intracellular coagulation inhibitor 2/LICI-2 and to a lesser extent by intracellular coagulation inhibitor 3/LICI-3. Its function is as follows. This enzyme is closely associated with an endotoxin-sensitive hemolymph coagulation system in limulus. Its active form catalyzes the conversion of coagulogen to insoluble coagulin gel. The sequence is that of Proclotting enzyme from Tachypleus tridentatus (Japanese horseshoe crab).